The sequence spans 136 residues: Putative zinc finger protein 818 (136 aa).

The segment at 64–83 adopts a C2H2-type 1; degenerate zinc-finger fold; sequence NVCGKVLSQNSHLVNHQRIH. The C2H2-type 2 zinc finger occupies 89–111; that stretch reads YRCHECGKAFTQGSRFINHQIVH.

This sequence belongs to the krueppel C2H2-type zinc-finger protein family.

Its subcellular location is the nucleus. Its function is as follows. May be involved in transcriptional regulation. The sequence is that of Putative zinc finger protein 818 (ZNF818P) from Homo sapiens (Human).